The following is a 116-amino-acid chain: UPF0102 protein Neut_1662 (116 aa).

Belongs to the UPF0102 family.

This Nitrosomonas eutropha (strain DSM 101675 / C91 / Nm57) protein is UPF0102 protein Neut_1662.